The following is a 179-amino-acid chain: Probable chorismate pyruvate-lyase (179 aa).

Arg82, Leu120, and Glu165 together coordinate substrate.

It belongs to the UbiC family.

The protein localises to the cytoplasm. It carries out the reaction chorismate = 4-hydroxybenzoate + pyruvate. It participates in cofactor biosynthesis; ubiquinone biosynthesis. Functionally, removes the pyruvyl group from chorismate, with concomitant aromatization of the ring, to provide 4-hydroxybenzoate (4HB) for the ubiquinone pathway. This chain is Probable chorismate pyruvate-lyase, found in Vibrio vulnificus (strain YJ016).